Reading from the N-terminus, the 119-residue chain is Iron-sulfur cluster insertion protein ErpA (119 aa).

Iron-sulfur cluster is bound by residues Cys-47, Cys-111, and Cys-113.

It belongs to the HesB/IscA family. As to quaternary structure, homodimer. Requires iron-sulfur cluster as cofactor.

Its function is as follows. Required for insertion of 4Fe-4S clusters for at least IspG. The polypeptide is Iron-sulfur cluster insertion protein ErpA (Alcanivorax borkumensis (strain ATCC 700651 / DSM 11573 / NCIMB 13689 / SK2)).